A 282-amino-acid polypeptide reads, in one-letter code: Ribosomal protein L11 methyltransferase (282 aa).

S-adenosyl-L-methionine contacts are provided by Thr-133, Gly-154, Asp-175, and Asn-216.

It belongs to the methyltransferase superfamily. PrmA family.

Its subcellular location is the cytoplasm. The enzyme catalyses L-lysyl-[protein] + 3 S-adenosyl-L-methionine = N(6),N(6),N(6)-trimethyl-L-lysyl-[protein] + 3 S-adenosyl-L-homocysteine + 3 H(+). In terms of biological role, methylates ribosomal protein L11. This is Ribosomal protein L11 methyltransferase from Campylobacter jejuni subsp. doylei (strain ATCC BAA-1458 / RM4099 / 269.97).